Consider the following 88-residue polypeptide: uncharacterized protein (88 aa).

Residues 1–31 (MIPRDPRSPAPDLSAINQPAGRAERRSGPAT) form a disordered region.

This is an uncharacterized protein from Escherichia coli.